We begin with the raw amino-acid sequence, 176 residues long: Urease accessory protein UreE (176 aa).

The interval 147–176 is disordered; that stretch reads AGAYQQGGGHSHGHAHSHSHEKPHSHTHNH.

Belongs to the UreE family.

The protein resides in the cytoplasm. Functionally, involved in urease metallocenter assembly. Binds nickel. Probably functions as a nickel donor during metallocenter assembly. This chain is Urease accessory protein UreE, found in Alcanivorax borkumensis (strain ATCC 700651 / DSM 11573 / NCIMB 13689 / SK2).